Consider the following 471-residue polypeptide: Trigger factor (471 aa).

The region spanning glutamate 169–leucine 254 is the PPIase FKBP-type domain. Residues valine 435–alanine 471 are disordered. Residues lysine 461 to alanine 471 show a composition bias toward basic and acidic residues.

Belongs to the FKBP-type PPIase family. Tig subfamily.

The protein resides in the cytoplasm. The enzyme catalyses [protein]-peptidylproline (omega=180) = [protein]-peptidylproline (omega=0). Its function is as follows. Involved in protein export. Acts as a chaperone by maintaining the newly synthesized protein in an open conformation. Functions as a peptidyl-prolyl cis-trans isomerase. In Brucella abortus (strain S19), this protein is Trigger factor.